The primary structure comprises 245 residues: 1-(5-phosphoribosyl)-5-[(5-phosphoribosylamino)methylideneamino] imidazole-4-carboxamide isomerase (245 aa).

Aspartate 8 serves as the catalytic Proton acceptor. Aspartate 129 serves as the catalytic Proton donor.

Belongs to the HisA/HisF family.

The protein localises to the cytoplasm. It catalyses the reaction 1-(5-phospho-beta-D-ribosyl)-5-[(5-phospho-beta-D-ribosylamino)methylideneamino]imidazole-4-carboxamide = 5-[(5-phospho-1-deoxy-D-ribulos-1-ylimino)methylamino]-1-(5-phospho-beta-D-ribosyl)imidazole-4-carboxamide. It functions in the pathway amino-acid biosynthesis; L-histidine biosynthesis; L-histidine from 5-phospho-alpha-D-ribose 1-diphosphate: step 4/9. In Rhodopseudomonas palustris (strain BisB18), this protein is 1-(5-phosphoribosyl)-5-[(5-phosphoribosylamino)methylideneamino] imidazole-4-carboxamide isomerase.